A 259-amino-acid chain; its full sequence is uncharacterized protein (259 aa).

Disordered regions lie at residues Gly22–Gly68, Arg111–Glu133, and Leu181–Gln202. Positions Asn50–Glu63 are enriched in acidic residues. The residue at position 127 (Ser127) is a Phosphoserine.

This is an uncharacterized protein from Schizosaccharomyces pombe (strain 972 / ATCC 24843) (Fission yeast).